A 102-amino-acid polypeptide reads, in one-letter code: Turripeptide OL55-like (102 aa).

Contains 8 disulfide bonds. In terms of tissue distribution, expressed by the venom duct.

The protein localises to the secreted. Its function is as follows. Acts as a neurotoxin by inhibiting an ion channel. This Lophiotoma acuta (Marbled turris) protein is Turripeptide OL55-like.